The chain runs to 256 residues: Polycomb group RING finger protein 5 (256 aa).

The RING-type zinc-finger motif lies at 18 to 57 (CYICKGYLIKPTTVTECLHTFCKTCIVQHFEDSNDCPRCG). 2 stretches are compositionally biased toward basic and acidic residues: residues 94 to 103 (ESEFWKKNKP) and 110 to 120 (DTSKADKPKVD). A disordered region spans residues 94–133 (ESEFWKKNKPQENGQDDTSKADKPKVDEEGDENEDDKDYH).

In terms of assembly, component of a PRC1-like complex that contains PCGF5, RNF2 and UBE2D3. Interacts with RNF2; the interaction is direct. Interacts with CBX6, CBX7 and CBX8. Interacts with AUTS2; the interaction is direct. Identified in a complex that contains AUTS2, PCGF5, CSNK2B and RNF2.

The protein resides in the nucleus. It localises to the nucleoplasm. Its function is as follows. Component of a Polycomb group (PcG) multiprotein PRC1-like complex, a complex class required to maintain the transcriptionally repressive state of many genes, including Hox genes, throughout development. PcG PRC1 complex acts via chromatin remodeling and modification of histones; it mediates monoubiquitination of histone H2A 'Lys-119', rendering chromatin heritably changed in its expressibility. Within the PRC1-like complex, regulates RNF2 ubiquitin ligase activity. Plays a redundant role with PCGF3 as part of a PRC1-like complex that mediates monoubiquitination of histone H2A 'Lys-119' on the X chromosome and is required for normal silencing of one copy of the X chromosome in XX females. This chain is Polycomb group RING finger protein 5 (PCGF5), found in Homo sapiens (Human).